Consider the following 394-residue polypeptide: 3-phenylpropionate/cinnamic acid dioxygenase ferredoxin--NAD(+) reductase component (394 aa).

Position 5 to 36 (5 to 36 (TFIIVGAGQAGAMAAATLRQQQFDGDIILIGK)) interacts with FAD. Residue 146–174 (RILIVGGGVIGLELAATSCELGANVTVIE) participates in NAD(+) binding.

It belongs to the bacterial ring-hydroxylating dioxygenase ferredoxin reductase family. This dioxygenase system consists of four proteins: the two subunits of the hydroxylase component (HcaE and HcaF), a ferredoxin (HcaC) and a ferredoxin reductase (HcaD). Requires FAD as cofactor.

The enzyme catalyses 2 reduced [2Fe-2S]-[ferredoxin] + NAD(+) + H(+) = 2 oxidized [2Fe-2S]-[ferredoxin] + NADH. Its pathway is aromatic compound metabolism; 3-phenylpropanoate degradation. In terms of biological role, part of the multicomponent 3-phenylpropionate dioxygenase, that converts 3-phenylpropionic acid (PP) and cinnamic acid (CI) into 3-phenylpropionate-dihydrodiol (PP-dihydrodiol) and cinnamic acid-dihydrodiol (CI-dihydrodiol), respectively. In Photorhabdus laumondii subsp. laumondii (strain DSM 15139 / CIP 105565 / TT01) (Photorhabdus luminescens subsp. laumondii), this protein is 3-phenylpropionate/cinnamic acid dioxygenase ferredoxin--NAD(+) reductase component.